We begin with the raw amino-acid sequence, 391 residues long: Ectodysplasin-A (391 aa).

Residues 1-21 show a composition bias toward basic and acidic residues; it reads MGYPEVERREPLPAAAPRERG. The tract at residues 1–28 is disordered; sequence MGYPEVERREPLPAAAPRERGSQGCGCR. The Cytoplasmic segment spans residues 1–41; it reads MGYPEVERREPLPAAAPRERGSQGCGCRGAPARAGEGNSCR. The helical; Signal-anchor for type II membrane protein transmembrane segment at 42 to 62 threads the bilayer; that stretch reads LFLGFFGLSLALHLLTLCCYL. Topologically, residues 63–391 are extracellular; the sequence is ELRSELRRER…AIRLGEAPAS (329 aa). 2 disordered regions span residues 73-130 and 145-245; these read GAES…SQDG and SYSE…GTRE. Over residues 76 to 96 the composition is skewed to low complexity; that stretch reads SRFSGPGTPGTSGTLSSPGGL. Residues 180-229 form the Collagen-like domain; it reads GPPGPNGPPGPPGPPGPQGPPGIPGIPGIPGTTVMGPPGPPGPPGPQGPP. Pro residues-rich tracts occupy residues 181–203 and 216–228; these read PPGP…PGIP and PPGP…PQGP. The THD domain maps to 249-385; that stretch reads AVVHLQGQGS…HTTFFGAIRL (137 aa). N313 carries an N-linked (GlcNAc...) asparagine glycan. C332 and C346 form a disulfide bridge. N-linked (GlcNAc...) asparagine glycosylation is present at N372.

It belongs to the tumor necrosis factor family. As to quaternary structure, homotrimer. The homotrimers may then dimerize and form higher-order oligomers. In terms of processing, N-glycosylated. Post-translationally, processing by furin produces a secreted form.

The protein resides in the cell membrane. Its subcellular location is the secreted. Functionally, cytokine which is involved in epithelial-mesenchymal signaling during morphogenesis of ectodermal organs. Functions as a ligand activating the DEATH-domain containing receptors EDAR and EDA2R. Isoform A1 binds only to the receptor EDAR, while isoform A2 binds exclusively to the receptor EDA2R. May also play a role in cell adhesion. Isoform A1 binds only to the receptor EDAR, while isoform A2 binds exclusively to the receptor EDA2R. In terms of biological role, isoform A2 binds exclusively to the receptor EDA2R. This Bos taurus (Bovine) protein is Ectodysplasin-A (EDA).